The primary structure comprises 962 residues: Exportin-T (962 aa).

Met-1 bears the N-acetylmethionine mark. The interval 1–385 (MDEQALLGLN…MLAVMKKLTY (385 aa)) is necessary for interaction with Ran, nuclear localization and nuclear import. Residues 443-962 (FMEVEVAIRL…LKVFFQRAKP (520 aa)) form a necessary for tRNA-binding, cytoplasmic localization and nuclear export region. Position 634 is an N6-acetyllysine (Lys-634).

This sequence belongs to the exportin family. In terms of assembly, found in a complex with XPOT, Ran and tRNA. Probably found in a complex with nucleoporins. Interacts with Ran and tRNA in a GTP-dependent manner.

The protein resides in the nucleus. The protein localises to the cytoplasm. Mediates the nuclear export of aminoacylated tRNAs. In the nucleus binds to tRNA and to the GTPase Ran in its active GTP-bound form. Docking of this trimeric complex to the nuclear pore complex (NPC) is mediated through binding to nucleoporins. Upon transit of a nuclear export complex into the cytoplasm, disassembling of the complex and hydrolysis of Ran-GTP to Ran-GDP (induced by RANBP1 and RANGAP1, respectively) cause release of the tRNA from the export receptor. XPOT then return to the nuclear compartment and mediate another round of transport. The directionality of nuclear export is thought to be conferred by an asymmetric distribution of the GTP- and GDP-bound forms of Ran between the cytoplasm and nucleus. This is Exportin-T (XPOT) from Homo sapiens (Human).